The sequence spans 67 residues: Probable Sec-independent protein translocase protein TatE (67 aa).

A helical transmembrane segment spans residues Ile4–Gly21.

The protein belongs to the TatA/E family. TatE subfamily.

The protein localises to the cell inner membrane. In terms of biological role, part of the twin-arginine translocation (Tat) system that transports large folded proteins containing a characteristic twin-arginine motif in their signal peptide across membranes. TatE shares overlapping functions with TatA. The chain is Probable Sec-independent protein translocase protein TatE from Salmonella arizonae (strain ATCC BAA-731 / CDC346-86 / RSK2980).